The following is a 240-amino-acid chain: Gas vesicle protein C (240 aa).

Over residues 1–13 (MALKDKWQQDRIG) the composition is skewed to basic and acidic residues. Positions 1–20 (MALKDKWQQDRIGRQQGVQE) are disordered. Repeats lie at residues 18–50 (VQER…RQGF), 51–83 (VTGV…LENF), 84–116 (IQQL…LSEF), 117–149 (REDL…LAIF), and 150–207 (RQTL…LQDY). Residues 18–207 (VQERQQQVQT…GVFRAELQDY (190 aa)) form a 5 X 33 AA tandem repeats region.

The protein belongs to the gas vesicle GvpC family.

It is found in the gas vesicle. Confers stability, involved in shaping gas vesicles, hollow, gas filled proteinaceous nanostructures. During planktonic growth they allow positioning of the organism at a favorable depth for light or nutrient acquisition. In Planktothrix agardhii (Oscillatoria agardhii), this protein is Gas vesicle protein C.